Here is a 259-residue protein sequence, read N- to C-terminus: Global transcriptional regulator CodY (259 aa).

The segment at 1 to 155 is GAF domain; the sequence is MELLAKTRKL…SSTVVGMEIL (155 aa). A DNA-binding region (H-T-H motif) is located at residues 203–222; sequence ASKIADRVGITRSVIVNALR. Phosphoserine is present on Ser215.

The protein belongs to the CodY family.

The protein localises to the cytoplasm. DNA-binding global transcriptional regulator which is involved in the adaptive response to starvation and acts by directly or indirectly controlling the expression of numerous genes in response to nutrient availability. During rapid exponential growth, CodY is highly active and represses genes whose products allow adaptation to nutrient depletion. The protein is Global transcriptional regulator CodY of Bacillus mycoides (strain KBAB4) (Bacillus weihenstephanensis).